The primary structure comprises 296 residues: dTDP-rhamnosyl transferase RfbF (296 aa).

This sequence belongs to the glycosyltransferase 2 family.

It participates in bacterial outer membrane biogenesis; lipopolysaccharide biosynthesis. The polypeptide is dTDP-rhamnosyl transferase RfbF (rfbF) (Shigella flexneri).